We begin with the raw amino-acid sequence, 188 residues long: Peptidyl-tRNA hydrolase (188 aa).

Tyr-15 contributes to the tRNA binding site. His-20 serves as the catalytic Proton acceptor. The tRNA site is built by Tyr-64, Asn-66, and Asn-112.

This sequence belongs to the PTH family. In terms of assembly, monomer.

It is found in the cytoplasm. The catalysed reaction is an N-acyl-L-alpha-aminoacyl-tRNA + H2O = an N-acyl-L-amino acid + a tRNA + H(+). In terms of biological role, hydrolyzes ribosome-free peptidyl-tRNAs (with 1 or more amino acids incorporated), which drop off the ribosome during protein synthesis, or as a result of ribosome stalling. Functionally, catalyzes the release of premature peptidyl moieties from peptidyl-tRNA molecules trapped in stalled 50S ribosomal subunits, and thus maintains levels of free tRNAs and 50S ribosomes. This chain is Peptidyl-tRNA hydrolase, found in Cytophaga hutchinsonii (strain ATCC 33406 / DSM 1761 / CIP 103989 / NBRC 15051 / NCIMB 9469 / D465).